A 110-amino-acid chain; its full sequence is Small ribosomal subunit protein bS16 (110 aa).

Residues 84–110 (KRTARNNPEKAVPRKERKAQAEAAAKS) are disordered. Basic and acidic residues predominate over residues 90-103 (NPEKAVPRKERKAQ).

It belongs to the bacterial ribosomal protein bS16 family.

The sequence is that of Small ribosomal subunit protein bS16 from Nitrobacter hamburgensis (strain DSM 10229 / NCIMB 13809 / X14).